We begin with the raw amino-acid sequence, 1362 residues long: Bromodomain-containing protein 4B (1362 aa).

Disordered regions lie at residues 22–57 (EGAQMSGQQQPAQPQPQTPMMQTPPPEIARPNQPKR), 200–243 (SLGD…HPPA), 274–367 (LANH…DSKT), 476–639 (DEPE…SYEE), 699–941 (CLRK…TQSP), and 953–1349 (SQAP…MNFQ). The segment covering 34–49 (QPQPQTPMMQTPPPEI) has biased composition (pro residues). One can recognise a Bromo 1 domain in the interval 57-163 (RQTNQLQYLL…KLFLQKISEM (107 aa)). Over residues 219-234 (TPTPPAVIRAPTPPQT) the composition is skewed to pro residues. Over residues 326–342 (PRKESGRQIRPIKKTEV) the composition is skewed to basic and acidic residues. The segment covering 348–358 (PAPPDLHPQPA) has biased composition (pro residues). The region spanning 365-474 (SKTSEQLRYC…DVFEMRFAKM (110 aa)) is the Bromo 2 domain. Residues 481–503 (APAPVPSPAPGPPAPSIKIPPPT) show a composition bias toward pro residues. Residues 503–521 (TSSDTSSDSSSDSESSSDS) are NPS region. Low complexity predominate over residues 504–516 (SSDTSSDSSSDSE). A BID region region spans residues 542–597 (QLAALSQPQPNKPKKKEREKRKEKHKRKEEVEETRKGRIREPPAKKPKKSVQVSGG). Residues 553–568 (KPKKKEREKRKEKHKR) show a composition bias toward basic residues. The span at 569 to 585 (KEEVEETRKGRIREPPA) shows a compositional bias: basic and acidic residues. The span at 606–621 (PPPVTRPARPAPPPAP) shows a compositional bias: pro residues. Residues 623–707 (ESSEEDTQRC…SCLRKKRKPQ (85 aa)) form the NET domain. The segment covering 628-639 (DTQRCRPMSYEE) has biased composition (basic and acidic residues). Over residues 722–737 (SYSSSESESSSESSTS) the composition is skewed to low complexity. Basic residues predominate over residues 750–766 (QKKKGHSGRESRKHHHP). Pro residues-rich tracts occupy residues 772-793 (IAPPPVMKPPSPTLAPSYPPPS) and 871-889 (PARPPSASPPLPPPQPHHQ). The segment covering 893–905 (HVHHHHHHHHHAQ) has biased composition (basic residues). A compositionally biased stretch (polar residues) spans 926–941 (YLQQLHKSQQPPTQSP). 4 stretches are compositionally biased toward low complexity: residues 953-963 (SQAPMAAPAQS), 977-1006 (SSASPAPSPASSHIHQMQSPPVVPQQQPAG), 1014-1028 (QQQQQQQQQQHPALQ), and 1041-1050 (HQQAKQQQVI). A C-terminal (CTD) region region spans residues 1061–1361 (RQQKQETYPG…LMEIFEQNLF (301 aa)). Over residues 1086–1099 (QVPPYPGLTHPPSP) the composition is skewed to pro residues. Basic and acidic residues predominate over residues 1186 to 1207 (PEKEKQKQEPKTPVAPKKDLKI). Residues 1224–1234 (PTSAGKSTSDS) show a composition bias toward polar residues. Residues 1236-1293 (ELFRRQAREKEERERALKHQAEQAERMRREQERMRTREDDDVQDQTRKAHEEARRRQE) are compositionally biased toward basic and acidic residues. Residues 1308 to 1319 (PAAPSPAQSSQP) show a composition bias toward low complexity. The segment covering 1322–1334 (DQREMARKREQER) has biased composition (basic and acidic residues).

This sequence belongs to the BET family.

The protein localises to the nucleus. It is found in the chromosome. Its function is as follows. Chromatin reader protein that recognizes and binds acetylated histones and plays a key role in transmission of epigenetic memory across cell divisions and transcription regulation. Remains associated with acetylated chromatin throughout the entire cell cycle and provides epigenetic memory for postmitotic G1 gene transcription by preserving acetylated chromatin status and maintaining high-order chromatin structure. During interphase, plays a key role in regulating the transcription of signal-inducible genes by associating with the P-TEFb complex and recruiting it to promoters. The chain is Bromodomain-containing protein 4B (brd4-b) from Xenopus laevis (African clawed frog).